Here is a 376-residue protein sequence, read N- to C-terminus: Arginine/serine-rich coiled-coil protein 2 (376 aa).

A disordered region spans residues 1–171; the sequence is MIRTNFLLKQ…PSPPPFRGRN (171 aa). Residues 13-52 are compositionally biased toward basic and acidic residues; that stretch reads RHESKDKSSKRHKSEEHNDKEHSSDKGRERLNSSENGEDR. At Ser45 the chain carries Phosphoserine. Over residues 53–155 the composition is skewed to basic residues; sequence HKRKERKSSR…KRIEKPRRFS (103 aa). Residues 171-214 are a coiled coil; the sequence is NTAMDAQEALARRLERAKKLQEQREKEMVEKQKQQEMAAAAAAT. Lys317 participates in a covalent cross-link: Glycyl lysine isopeptide (Lys-Gly) (interchain with G-Cter in SUMO1); alternate. Lys317 is covalently cross-linked (Glycyl lysine isopeptide (Lys-Gly) (interchain with G-Cter in SUMO2); alternate). Residue Ser318 is modified to Phosphoserine.

The protein belongs to the RSRC2 family.

This Rattus norvegicus (Rat) protein is Arginine/serine-rich coiled-coil protein 2 (Rsrc2).